We begin with the raw amino-acid sequence, 264 residues long: MFPELNSLLNASPDTFKPGDFILLSDRQADASFLIHHYLSFYLRAGCKVCFLGLVQSFSHYSAVGQRLGVSLTQAREKGQLVFLEGLKDSIGAILKEDTSEGTQALSYLRSPRAGLEGLFRFVESSLCQSGDDGPPVLIIDDLSVLLSLGVSAGAILDFTLYCRATVCSELQGNMVILVRCEEEDADDDEEGLNLLQRGLVHQCHLALHVEGLPTGYCRDIHGQMEVWWRQGENDAYNQRKIFQFKVHDKGASFFTRGTSRAVL.

The protein belongs to the ELP6 family. In terms of assembly, component of the elongator complex.

Its subcellular location is the cytoplasm. It localises to the nucleus. It functions in the pathway tRNA modification; 5-methoxycarbonylmethyl-2-thiouridine-tRNA biosynthesis. Functionally, component of the elongator complex which is required for multiple tRNA modifications, including mcm5U (5-methoxycarbonylmethyl uridine), mcm5s2U (5-methoxycarbonylmethyl-2-thiouridine), and ncm5U (5-carbamoylmethyl uridine). The elongator complex catalyzes formation of carboxymethyluridine in the wobble base at position 34 in tRNAs. This is Elongator complex protein 6 (elp6) from Danio rerio (Zebrafish).